Consider the following 157-residue polypeptide: Cytochrome c-type biogenesis protein CcmE (157 aa).

At 1-8 (MNPLRRKR) the chain is on the cytoplasmic side. Residues 9–29 (LLIILAVLGGVGLALTLALSA) traverse the membrane as a helical; Signal-anchor for type II membrane protein segment. At 30–157 (LKENINLFYT…ASMPARQADR (128 aa)) the chain is on the periplasmic side. Positions 124 and 128 each coordinate heme. The disordered stretch occupies residues 132–157 (EVSKALRESGQATPAPASMPARQADR).

The protein belongs to the CcmE/CycJ family.

The protein localises to the cell inner membrane. Functionally, heme chaperone required for the biogenesis of c-type cytochromes. Transiently binds heme delivered by CcmC and transfers the heme to apo-cytochromes in a process facilitated by CcmF and CcmH. In Pseudomonas syringae pv. tomato (strain ATCC BAA-871 / DC3000), this protein is Cytochrome c-type biogenesis protein CcmE.